Reading from the N-terminus, the 283-residue chain is 4-diphosphocytidyl-2-C-methyl-D-erythritol kinase (283 aa).

Lys-13 is an active-site residue. Residue 96–106 (PMGGGIGGGSS) coordinates ATP. Asp-138 is a catalytic residue.

This sequence belongs to the GHMP kinase family. IspE subfamily.

The enzyme catalyses 4-CDP-2-C-methyl-D-erythritol + ATP = 4-CDP-2-C-methyl-D-erythritol 2-phosphate + ADP + H(+). It participates in isoprenoid biosynthesis; isopentenyl diphosphate biosynthesis via DXP pathway; isopentenyl diphosphate from 1-deoxy-D-xylulose 5-phosphate: step 3/6. Functionally, catalyzes the phosphorylation of the position 2 hydroxy group of 4-diphosphocytidyl-2C-methyl-D-erythritol. The sequence is that of 4-diphosphocytidyl-2-C-methyl-D-erythritol kinase from Pseudomonas fluorescens (strain Pf0-1).